Consider the following 626-residue polypeptide: MSDPVRITNPGAESLGYDSDGHEIMAVDIYVNPPRVDVFHGTPPAWSSFGNKTIWGGNEWVDDSPTRSDIEKRDKEITAYKNTLSAQQKENENKRTEAGKRLSAAIAAREKDENTLKTLRAGNADAADITRQEFRLLQAELREYGFRTEIAGYDALRLHTESRMLFADADSLRISPREARSLIEQAEKRQKDAQNADKKAADMLAEYERRKGILDTRLSELEKNGGAALAVLDAQQARLLGQQTRNDRAISEARNKLSSVTESLKTARNALTRAEQQLTQQKNTPDGKTIVSPEKFPGRSSTNHSIVVSGDPRFAGTIKITTSAVIDNRANLNYLLTHSGLDYKRNILNDRNPVVTEDVEGDKKIYNAEVAEWDKLRQRLLDARNKITSAESAINSARNNVSARTNEQKHANDALNALLKEKENIRSQLADINQKIAEEKRKRDEINMVKDAIKLTSDFYRTIYDEFGKQASELAKELASVSQGKQIKSVDDALNAFDKFRNNLNKKYNIQDRMAISKALEAINQVHMAENFKLFSKAFGFTGKVIERYDVAVELQKAVKTDNWRPFFVKLESLAAGRAASAVTAWAFSVMLGTPVGILGFAIIMAAVSALVNDKFIEQVNKLIGI.

Residues 276 to 286 show a composition bias toward polar residues; it reads QQLTQQKNTPD. The disordered stretch occupies residues 276–308; sequence QQLTQQKNTPDGKTIVSPEKFPGRSSTNHSIVV. A helical membrane pass occupies residues 588–612; that stretch reads FSVMLGTPVGILGFAIIMAAVSALV.

The protein belongs to the channel forming colicin family.

The protein resides in the host membrane. This colicin is a channel-forming colicin. This class of transmembrane toxins depolarize the cytoplasmic membrane, leading to dissipation of cellular energy. Functionally, colicins are polypeptide toxins produced by and active against E.coli and closely related bacteria. The chain is Colicin-Ib (cib) from Escherichia coli.